Reading from the N-terminus, the 197-residue chain is Syndecan-4 (197 aa).

An N-terminal signal peptide occupies residues 1–19 (MPLPRAAFLLGLLLAAAAA). At 20 to 147 (ESVRETETMD…SIFERTEVLT (128 aa)) the chain is on the extracellular side. 3 O-linked (Xyl...) (glycosaminoglycan) serine glycosylation sites follow: Ser38, Ser65, and Ser67. Asn124 and Asn136 each carry an N-linked (GlcNAc...) asparagine glycan. A helical transmembrane segment spans residues 148-168 (ALIAGGAVGLLFAVFLILLLV). Residues 169 to 197 (YRMKKKDEGSYDLGKKPIYKKAPTNEFYA) are Cytoplasmic-facing.

It belongs to the syndecan proteoglycan family. In terms of assembly, interacts with SDOS. Post-translationally, O-glycosylated; contains both chondroitin sulfate and heparan sulfate. Ser-38, Ser-65 and Ser-67 can all be modified by either chondroitin sulfate or heparan sulfate, and the protein exists in forms that contain only chondroitin sulfate, only heparan sulfate and both chondroitin sulfate and heparan sulfate.

Its subcellular location is the membrane. Functionally, cell surface proteoglycan which regulates exosome biogenesis in concert with SDCBP and PDCD6IP. The chain is Syndecan-4 (SDC4) from Gallus gallus (Chicken).